A 252-amino-acid polypeptide reads, in one-letter code: MMTKRIIPCLDVKEGRVVKGVQFLGLKDAGDPVELAQIYDEEGADELVFLDISASHEGRKTMVDVVKQVASTLAIPFTVGGGINHLDDMKRILRAGADKVSVNTAAVLRPELISEGADFFGSQCIVVAIDAKYVEEKKAYMVYTHGGRRQTDIEVSDWAKEAVLRGAGEILLTSMDADGEKKGFDHRLTKLVSEAVTVPVIASGGAGNAQHMLEAFTKGEADAALAASIFHYKETSIQEVKTYLKEHGVKVR.

Active-site residues include Asp-11 and Asp-130.

It belongs to the HisA/HisF family. In terms of assembly, heterodimer of HisH and HisF.

It is found in the cytoplasm. The catalysed reaction is 5-[(5-phospho-1-deoxy-D-ribulos-1-ylimino)methylamino]-1-(5-phospho-beta-D-ribosyl)imidazole-4-carboxamide + L-glutamine = D-erythro-1-(imidazol-4-yl)glycerol 3-phosphate + 5-amino-1-(5-phospho-beta-D-ribosyl)imidazole-4-carboxamide + L-glutamate + H(+). It functions in the pathway amino-acid biosynthesis; L-histidine biosynthesis; L-histidine from 5-phospho-alpha-D-ribose 1-diphosphate: step 5/9. In terms of biological role, IGPS catalyzes the conversion of PRFAR and glutamine to IGP, AICAR and glutamate. The HisF subunit catalyzes the cyclization activity that produces IGP and AICAR from PRFAR using the ammonia provided by the HisH subunit. The sequence is that of Imidazole glycerol phosphate synthase subunit HisF from Bacillus pumilus (strain SAFR-032).